The following is a 554-amino-acid chain: Urocanate hydratase (554 aa).

Residues 50-51, Q128, 174-176, E194, R199, 240-241, 261-265, 271-272, and Y320 contribute to the NAD(+) site; these read GG, GMG, NA, QTSAH, and YI. Residue C408 is part of the active site. G490 provides a ligand contact to NAD(+).

This sequence belongs to the urocanase family. NAD(+) serves as cofactor.

It is found in the cytoplasm. The enzyme catalyses 4-imidazolone-5-propanoate = trans-urocanate + H2O. It functions in the pathway amino-acid degradation; L-histidine degradation into L-glutamate; N-formimidoyl-L-glutamate from L-histidine: step 2/3. Its function is as follows. Catalyzes the conversion of urocanate to 4-imidazolone-5-propionate. The protein is Urocanate hydratase of Rubrobacter xylanophilus (strain DSM 9941 / JCM 11954 / NBRC 16129 / PRD-1).